The chain runs to 187 residues: Probable cobalt-precorrin-6B C(15)-methyltransferase (decarboxylating) (187 aa).

S-adenosyl-L-methionine is bound by residues T15, 39–43, E60, and A89; that span reads GSCTG.

It belongs to the methyltransferase superfamily. Archaeal-type CbiT family.

The catalysed reaction is Co-precorrin-6B + S-adenosyl-L-methionine = Co-precorrin-7 + S-adenosyl-L-homocysteine + CO2. Its pathway is cofactor biosynthesis; adenosylcobalamin biosynthesis; cob(II)yrinate a,c-diamide from sirohydrochlorin (anaerobic route): step 8/10. Its function is as follows. Catalyzes the methylation of C-15 in cobalt-precorrin-6B followed by the decarboxylation of C-12 to form cobalt-precorrin-7. This is Probable cobalt-precorrin-6B C(15)-methyltransferase (decarboxylating) from Halobacterium salinarum (strain ATCC 700922 / JCM 11081 / NRC-1) (Halobacterium halobium).